The chain runs to 343 residues: Vancomycin/teicoplanin A-type resistance protein VanA (343 aa).

Residues Lys-133, 169-171 (FVK), 177-178 (SS), 207-214 (EQAVSGCE), and Phe-241 each bind ATP. One can recognise an ATP-grasp domain in the interval 137–338 (YIVAKNAGIA…LPELIDRLIV (202 aa)). Substrate is bound at residue His-244. 304 to 305 (NE) is a binding site for ATP. Mg(2+)-binding residues include Glu-305 and Asn-307.

The protein belongs to the D-alanine--D-alanine ligase family. It depends on Mg(2+) as a cofactor. Requires Mn(2+) as cofactor.

Its subcellular location is the cell membrane. It catalyses the reaction (R)-lactate + D-alanine + ATP = D-alanyl-(R)-lactate + ADP + phosphate. Functionally, required for high-level resistance to glycopeptide antibiotics. D-Ala--D-Ala ligase of altered specificity which catalyzes ester bond formation between D-Ala and various D-hydroxy acids; produces a peptidoglycan which does not terminate in D-alanine but in D-lactate, thus preventing vancomycin or teicoplanin binding. The protein is Vancomycin/teicoplanin A-type resistance protein VanA (vanA) of Enterococcus faecium (Streptococcus faecium).